The primary structure comprises 166 residues: CDP-archaeol synthase (166 aa).

4 helical membrane passes run 42 to 62, 73 to 93, 104 to 124, and 128 to 148; these read FFGG…AATA, FLSV…KSFL, SWFL…ILIF, and WLFG…TPLL.

The protein belongs to the CDP-archaeol synthase family. Mg(2+) serves as cofactor.

It is found in the cell membrane. The catalysed reaction is 2,3-bis-O-(geranylgeranyl)-sn-glycerol 1-phosphate + CTP + H(+) = CDP-2,3-bis-O-(geranylgeranyl)-sn-glycerol + diphosphate. It participates in membrane lipid metabolism; glycerophospholipid metabolism. In terms of biological role, catalyzes the formation of CDP-2,3-bis-(O-geranylgeranyl)-sn-glycerol (CDP-archaeol) from 2,3-bis-(O-geranylgeranyl)-sn-glycerol 1-phosphate (DGGGP) and CTP. This reaction is the third ether-bond-formation step in the biosynthesis of archaeal membrane lipids. The protein is CDP-archaeol synthase of Methanoculleus marisnigri (strain ATCC 35101 / DSM 1498 / JR1).